We begin with the raw amino-acid sequence, 166 residues long: NAD(P)H-quinone oxidoreductase subunit I, chloroplastic (166 aa).

4Fe-4S ferredoxin-type domains follow at residues 55–84 and 95–124; these read GRIH…VDWK and LNYS…MTEE. The [4Fe-4S] cluster site is built by cysteine 64, cysteine 67, cysteine 70, cysteine 74, cysteine 104, cysteine 107, cysteine 110, and cysteine 114.

The protein belongs to the complex I 23 kDa subunit family. As to quaternary structure, NDH is composed of at least 16 different subunits, 5 of which are encoded in the nucleus. The cofactor is [4Fe-4S] cluster.

It is found in the plastid. Its subcellular location is the chloroplast thylakoid membrane. It catalyses the reaction a plastoquinone + NADH + (n+1) H(+)(in) = a plastoquinol + NAD(+) + n H(+)(out). The catalysed reaction is a plastoquinone + NADPH + (n+1) H(+)(in) = a plastoquinol + NADP(+) + n H(+)(out). In terms of biological role, NDH shuttles electrons from NAD(P)H:plastoquinone, via FMN and iron-sulfur (Fe-S) centers, to quinones in the photosynthetic chain and possibly in a chloroplast respiratory chain. The immediate electron acceptor for the enzyme in this species is believed to be plastoquinone. Couples the redox reaction to proton translocation, and thus conserves the redox energy in a proton gradient. The protein is NAD(P)H-quinone oxidoreductase subunit I, chloroplastic of Stevia rebaudiana (Stevia).